The primary structure comprises 111 residues: Large ribosomal subunit protein uL22 (111 aa).

The protein belongs to the universal ribosomal protein uL22 family. As to quaternary structure, part of the 50S ribosomal subunit.

This protein binds specifically to 23S rRNA; its binding is stimulated by other ribosomal proteins, e.g. L4, L17, and L20. It is important during the early stages of 50S assembly. It makes multiple contacts with different domains of the 23S rRNA in the assembled 50S subunit and ribosome. Its function is as follows. The globular domain of the protein is located near the polypeptide exit tunnel on the outside of the subunit, while an extended beta-hairpin is found that lines the wall of the exit tunnel in the center of the 70S ribosome. The sequence is that of Large ribosomal subunit protein uL22 from Chlamydia muridarum (strain MoPn / Nigg).